A 35-amino-acid chain; its full sequence is Non-specific lipid-transfer protein 1 (35 aa).

Cys13 and Cys28 are oxidised to a cystine.

In terms of tissue distribution, seeds.

In terms of biological role, plant non-specific lipid-transfer proteins transfer phospholipids as well as galactolipids across membranes. May play a role in wax or cutin deposition in the cell walls of expanding epidermal cells and certain secretory tissues. Inhibits the growth of F.oxysporum and P.infestans. This is Non-specific lipid-transfer protein 1 from Nigella sativa (Black cumin).